The chain runs to 53 residues: uncharacterized protein (53 aa).

Residues 4–24 form a helical membrane-spanning segment; the sequence is FILLIVGFIYGAGGVLLYSVY.

The protein resides in the host membrane. This is an uncharacterized protein from Acidianus bottle-shaped virus (isolate Italy/Pozzuoli) (ABV).